Reading from the N-terminus, the 396-residue chain is MDTLVMENSAPAQAASSPEFLFTSGQGTLSATDWASLITTPACEWPLLEQQIASALAAARPAGQANPLLIGCLRVRPGGSSCLYVPAAMSGDRPVPAAQAPVTAAMANQVVEANRVISVQSTPPASEFQASVSAALDAFAQGRLAKVVLSRKLTLTLHQPADPTQVMARLMAQNPHAFHFSLPLGQGRRLLGASPELLLRVSEGEVFTHPLARSARRASEPAQEQMVARDLLASRKDQHEHKLVIDEIRRVLTPHCRELAIPSSPSLMSTDTLWHLGTPIAGRLNGGEASVLSLACQLHPTPALCGYPTELARQFIREQEPFRRALFSGIVGWCDSQGNGEWAVVIRCGVLDGHQVELFAGAGIVAGSDPPWSGPRPGTKLGTMLKALGLDLEVAQ.

Belongs to the isochorismate synthase family.

It catalyses the reaction chorismate = isochorismate. Its pathway is siderophore biosynthesis; amonabactin biosynthesis. Functionally, involved in the synthesis of amonabactin, a phenolate siderophore containing 2,3-dihydroxybenzoic acid (2,3-DHB). This Aeromonas hydrophila protein is Putative isochorismate synthase (amoA).